A 603-amino-acid polypeptide reads, in one-letter code: Probable lysosomal cobalamin transporter (603 aa).

9 helical membrane passes run 13–33 (IWVAYAVAVALVFFVAVITVF), 50–70 (IVSLTALLATVFLLPVDIALV), 99–119 (IVYYSLYSFDALLCLVVIPFA), 150–170 (IAFIILVIILFLVGFFVPTAA), 201–221 (LLMTLGVLLYVLYTATGLALL), 318–338 (LFGGILLLCLSVILWISMLIT), 353–373 (GYILGHINVFQPVNWVFVKAA), 381–401 (ILMAFLILFLFSSSITGIASV), and 422–442 (ALLIATVMQALIILAINYAVV). Asparagine 509 carries an N-linked (GlcNAc...) asparagine glycan. A helical membrane pass occupies residues 512–532 (VFGAIDFWAQFAFLTVFLLVF). Asparagine 543 is a glycosylation site (N-linked (GlcNAc...) asparagine). The interval 578 to 603 (AKRTVGGHPNGQGYGTSGTNGTASSR) is disordered. Over residues 585–595 (HPNGQGYGTSG) the composition is skewed to gly residues. The N-linked (GlcNAc...) asparagine glycan is linked to asparagine 597.

It belongs to the LIMR family. LMBRD1 subfamily.

The protein resides in the lysosome membrane. In terms of biological role, probable lysosomal cobalamin transporter. Required to export cobalamin from lysosomes allowing its conversion to cofactors. This chain is Probable lysosomal cobalamin transporter, found in Neurospora crassa (strain ATCC 24698 / 74-OR23-1A / CBS 708.71 / DSM 1257 / FGSC 987).